Reading from the N-terminus, the 478-residue chain is MIQVLLVTICLAAFPYQGSSIILESGNVNDYEVIYPRKVTALPKGAVQPKYEDTMQYELKVNGEPVVLHLEKNKGLFSKDYSETHYSFDGRKITTNPSVEDHCYYHGRIENDADSTASISACNGLKGHFKLQGEMYLIEPLKLSDSEAHAVFKLKNVEKEDEAPKMCGVTQNWESYEPIKKASDLNLNPEHQRYVELFIVVDHGMYTKYNGDSDKIRQRVHQMVNIMKESYTYMYIDILLAGIEIWSNGDLINVQPASPNTLNSFGEWRETDLLKRKSHDNAQLLTSIAFDEQIIGRAYIGGICDPKRSTGVVQDHSEINLRVAVTMTHELGHNLGIHHDTDSCSCGGYSCIMSPVISDEPSKYFSDCSYIQCWEFIMNQKPQCILKKPLRTDTVSTPVSGNELLEAGIECDCGSLENPCCYATTCKMRPGSQCAEGLCCDQCRFMKKGTVCRVSMVDRNDDTCTGQSADCPRNGLYG.

The N-terminal stretch at 1-20 (MIQVLLVTICLAAFPYQGSS) is a signal peptide. A propeptide spanning residues 21-187 (IILESGNVND…PIKKASDLNL (167 aa)) is cleaved from the precursor. Positions 193–389 (RYVELFIVVD…QKPQCILKKP (197 aa)) constitute a Peptidase M12B domain. Disulfide bonds link Cys304-Cys384, Cys344-Cys368, and Cys346-Cys351. His329 lines the Zn(2+) pocket. Residue Glu330 is part of the active site. Residues His333 and His339 each coordinate Zn(2+). A propeptide spanning residues 390-407 (LRTDTVSTPVSGNELLEA) is cleaved from the precursor. Residues 397 to 478 (TPVSGNELLE…ADCPRNGLYG (82 aa)) form the Disintegrin domain. Cystine bridges form between Cys411-Cys426, Cys413-Cys421, Cys420-Cys443, Cys434-Cys440, Cys439-Cys464, and Cys452-Cys471. The Cell attachment site; atypical (MVD) motif lies at 456-458 (MVD).

It belongs to the venom metalloproteinase (M12B) family. P-II subfamily. P-IIa sub-subfamily. As to quaternary structure, monomer (disintegrin). The cofactor is Zn(2+). As to expression, expressed by the venom gland.

The protein localises to the secreted. It carries out the reaction Cleavage of 3-Asn-|-Gln-4, 9-Ser-|-His-10 and 14-Ala-|-Leu-15 bonds in insulin B chain and 14-Tyr-|-Gln-15 and 8-Thr-|-Ser-9 in A chain. Cleaves type IV collagen at 73-Ala-|-Gln-74 in alpha1-(IV) and at 7-Gly-|-Leu-8 in alpha2-(IV).. Functionally, snake venom zinc metalloproteinase that causes hemorrhage by provoking the degradation of the sub-endothelial matrix proteins (fibronectin, laminin, type IV collagen, nidogen, and gelatins). Its function is as follows. Potent inhibitor of both collagen- (IC(50)=4 nM) and ADP-induced (IC(50)=8 nM) platelet aggregation. May act by binding to the platelet receptor GPIIb/GPIIIa (ITGA2B/ITGB3). The polypeptide is Zinc metalloproteinase/disintegrin (Crotalus atrox (Western diamondback rattlesnake)).